The sequence spans 227 residues: Orotidine 5'-phosphate decarboxylase (227 aa).

Residues D8, K30, 59 to 68 (DLKLYDIPYT), T118, R178, Q187, G207, and R208 contribute to the substrate site. K61 acts as the Proton donor in catalysis.

The protein belongs to the OMP decarboxylase family. Type 1 subfamily. Homodimer.

It carries out the reaction orotidine 5'-phosphate + H(+) = UMP + CO2. It functions in the pathway pyrimidine metabolism; UMP biosynthesis via de novo pathway; UMP from orotate: step 2/2. In terms of biological role, catalyzes the decarboxylation of orotidine 5'-monophosphate (OMP) to uridine 5'-monophosphate (UMP). The sequence is that of Orotidine 5'-phosphate decarboxylase from Helicobacter pylori (strain J99 / ATCC 700824) (Campylobacter pylori J99).